Consider the following 717-residue polypeptide: Polyribonucleotide nucleotidyltransferase (717 aa).

2 residues coordinate Mg(2+): Asp-495 and Asp-501. A KH domain is found at 562–624 (PRMIMIQIPK…TALDSALSQI (63 aa)). The 70-residue stretch at 634-703 (GEVYEGKVKS…KTGKYRLSRK (70 aa)) folds into the S1 motif domain.

The protein belongs to the polyribonucleotide nucleotidyltransferase family. Mg(2+) serves as cofactor.

The protein resides in the cytoplasm. It catalyses the reaction RNA(n+1) + phosphate = RNA(n) + a ribonucleoside 5'-diphosphate. Involved in mRNA degradation. Catalyzes the phosphorolysis of single-stranded polyribonucleotides processively in the 3'- to 5'-direction. The polypeptide is Polyribonucleotide nucleotidyltransferase (Cytophaga hutchinsonii (strain ATCC 33406 / DSM 1761 / CIP 103989 / NBRC 15051 / NCIMB 9469 / D465)).